Consider the following 355-residue polypeptide: Peptide chain release factor 1 (355 aa).

Residue Q231 is modified to N5-methylglutamine.

The protein belongs to the prokaryotic/mitochondrial release factor family. Post-translationally, methylated by PrmC. Methylation increases the termination efficiency of RF1.

It localises to the cytoplasm. Functionally, peptide chain release factor 1 directs the termination of translation in response to the peptide chain termination codons UAG and UAA. The chain is Peptide chain release factor 1 from Aliarcobacter butzleri (strain RM4018) (Arcobacter butzleri).